We begin with the raw amino-acid sequence, 266 residues long: Hydroxyethylthiazole kinase (266 aa).

Met45 serves as a coordination point for substrate. Residues Arg120 and Thr165 each coordinate ATP. Ala192 provides a ligand contact to substrate.

It belongs to the Thz kinase family. The cofactor is Mg(2+).

It carries out the reaction 5-(2-hydroxyethyl)-4-methylthiazole + ATP = 4-methyl-5-(2-phosphooxyethyl)-thiazole + ADP + H(+). The protein operates within cofactor biosynthesis; thiamine diphosphate biosynthesis; 4-methyl-5-(2-phosphoethyl)-thiazole from 5-(2-hydroxyethyl)-4-methylthiazole: step 1/1. Its function is as follows. Catalyzes the phosphorylation of the hydroxyl group of 4-methyl-5-beta-hydroxyethylthiazole (THZ). In Psychrobacter sp. (strain PRwf-1), this protein is Hydroxyethylthiazole kinase.